A 148-amino-acid polypeptide reads, in one-letter code: Hemoglobin subunit beta (148 aa).

A Globin domain is found at 3–148 (DWTDAERSAI…VVSALGRQYH (146 aa)). Residues His64 and His93 each coordinate heme b.

The protein belongs to the globin family. In terms of assembly, heterotetramer of two alpha chains and two beta chains. Red blood cells.

In terms of biological role, involved in oxygen transport from gills to the various peripheral tissues. The protein is Hemoglobin subunit beta (hbb) of Oncorhynchus nerka (Sockeye salmon).